A 341-amino-acid chain; its full sequence is Ferrochelatase (341 aa).

Fe cation-binding residues include H189 and E293.

It belongs to the ferrochelatase family.

The protein resides in the cytoplasm. It catalyses the reaction heme b + 2 H(+) = protoporphyrin IX + Fe(2+). The protein operates within porphyrin-containing compound metabolism; protoheme biosynthesis; protoheme from protoporphyrin-IX: step 1/1. Catalyzes the ferrous insertion into protoporphyrin IX. This Pseudomonas fluorescens (strain SBW25) protein is Ferrochelatase.